A 200-amino-acid polypeptide reads, in one-letter code: Ubiquitin-conjugating enzyme E2 K (200 aa).

N-acetylalanine is present on Ala2. The region spanning 4–154 is the UBC core domain; sequence IAVQRIKREF…ARLWAHVYAG (151 aa). Lys14 is subject to N6-acetyllysine; alternate. Residue Lys14 forms a Glycyl lysine isopeptide (Lys-Gly) (interchain with G-Cter in SUMO); alternate linkage. Lys14 participates in a covalent cross-link: Glycyl lysine isopeptide (Lys-Gly) (interchain with G-Cter in SUMO1); alternate. Residue Cys92 is the Glycyl thioester intermediate of the active site. Ser159 carries the phosphoserine modification. One can recognise a UBA domain in the interval 160–200; that stretch reads PEYTKKIENLCAMGFDRNAVIVALSSKSWDVETATELLLSN.

It belongs to the ubiquitin-conjugating enzyme family. Interacts with RNF138/NARF. Interacts with BRCA1. In terms of processing, sumoylation at Lys-14 impairs catalytic activity.

Its subcellular location is the cytoplasm. It catalyses the reaction S-ubiquitinyl-[E1 ubiquitin-activating enzyme]-L-cysteine + [E2 ubiquitin-conjugating enzyme]-L-cysteine = [E1 ubiquitin-activating enzyme]-L-cysteine + S-ubiquitinyl-[E2 ubiquitin-conjugating enzyme]-L-cysteine.. It functions in the pathway protein modification; protein ubiquitination. Functionally, accepts ubiquitin from the E1 complex and catalyzes its covalent attachment to other proteins. In vitro, in the presence or in the absence of BRCA1-BARD1 E3 ubiquitin-protein ligase complex, catalyzes the synthesis of 'Lys-48'-linked polyubiquitin chains. Does not transfer ubiquitin directly to but elongates monoubiquitinated substrate protein. Mediates the selective degradation of short-lived and abnormal proteins, such as the endoplasmic reticulum-associated degradation (ERAD) of misfolded lumenal proteins. Ubiquitinates huntingtin. May mediate foam cell formation by the suppression of apoptosis of lipid-bearing macrophages through ubiquitination and subsequence degradation of p53/TP53. Proposed to be involved in ubiquitination and proteolytic processing of NF-kappa-B; in vitro supports ubiquitination of NFKB1. The protein is Ubiquitin-conjugating enzyme E2 K (UBE2K) of Bos taurus (Bovine).